We begin with the raw amino-acid sequence, 5495 residues long: Microtubule-associated protein futsch (5495 aa).

Disordered regions lie at residues 1 to 97 (MGDQ…DADG), 656 to 975 (AKAD…LKEE), 988 to 1074 (RDEM…AEEE), 1086 to 1111 (ERKA…EQSK), 1128 to 1167 (KSRT…IGAP), 1185 to 1204 (SATI…DERI), 1255 to 1275 (KDAP…SGER), 1306 to 1358 (HEEA…EPNK), 1402 to 1840 (NQED…VVES), 1866 to 2631 (EIGK…PGFV), 2709 to 2810 (AKTV…KDFA), 2830 to 4166 (LPTL…DLSL), 4196 to 4230 (KAES…EASP), 4362 to 4612 (IIPD…ASQL), 4636 to 4668 (AQKS…DDSL), 4687 to 4975 (AFST…QMLA), 5035 to 5065 (KTVT…ERDQ), 5101 to 5138 (SYEL…EEHS), 5170 to 5199 (PSTE…QTWA), and 5328 to 5350 (GLPS…PKKE). The segment covering 35–48 (AKGAGDGPAQDAAQ) has biased composition (low complexity). 3 stretches are compositionally biased toward basic and acidic residues: residues 656–672 (AKAD…HEAD), 696–716 (EPEH…KKVE), and 758–795 (GKAD…EKKS). Low complexity-rich tracts occupy residues 797 to 806 (PTTTPAARAP) and 819 to 831 (PATK…TPAK). The span at 832 to 843 (SAKEANNRKVLE) shows a compositional bias: basic and acidic residues. Positions 850 to 888 (RVQATSTVSRRVTSTASERRVQQQAEAKTAATGATQATQ) are enriched in low complexity. Over residues 918 to 931 (KAADLKKTRLDKGG) the composition is skewed to basic and acidic residues. The span at 932–942 (TTDSSLVSTPS) shows a compositional bias: polar residues. Composition is skewed to basic and acidic residues over residues 962–975 (DAEK…LKEE) and 988–1007 (RDEM…REMP). Residues 1012–1041 (GDGENEPDEEEEYLIIEKEEVEQYTEDSIV) are compositionally biased toward acidic residues. Positions 1047–1065 (MTKEEEIQKHQRDSQESEK) are enriched in basic and acidic residues. 2 stretches are compositionally biased toward basic and acidic residues: residues 1128 to 1140 (KSRT…KPAE) and 1148 to 1163 (PEEK…KDDQ). A compositionally biased stretch (polar residues) spans 1187-1196 (TIESGATTAP). 4 stretches are compositionally biased toward basic and acidic residues: residues 1306 to 1319 (HEEA…KDSQ), 1327 to 1337 (SHKEESAKEEK), 1343 to 1358 (KENK…EPNK), and 1408 to 1443 (EQVK…KETS). 2 consecutive repeat copies span residues 1469-1502 (REDT…VPAP) and 1513-1539 (LASK…KSKK). The interval 1469–4032 (REDTGSIESP…SPLASKESSR (2564 aa)) is 53 X approximate repeat. Basic and acidic residues-rich tracts occupy residues 1546 to 1555 (PESEAKDKKS), 1571 to 1663 (SVKD…DEKS), 1679 to 1696 (SVKD…RESI), 1718 to 1732 (GIKD…RRDS), and 1748 to 1779 (SVKD…DEKS). A run of 17 repeats spans residues 1622–1649 (KSAL…RESI), 1660–1686 (DEKS…ETEK), 1690–1718 (PSRR…VIDG), 1755–1782 (KSTE…SPLT), 1790–1818 (ESAV…RDVS), 1837–1865 (VVES…FVSL), 1874–1902 (SEVI…IVLP), 1911–1939 (PSRP…SVAE), 1948–1976 (KETS…ESVK), 1985–2013 (TSRP…STTQ), 2022–2050 (DEKS…EKSK), 2059–2087 (AEKS…EKSK), 2096–2124 (AEKS…EKSK), 2133–2161 (AEKS…EKSK), 2170–2198 (AEKS…EKSK), 2215–2243 (KEAS…RESV), and 2262–2292 (ESIK…KEAS). Positions 1804–1815 (ERSQPESVTASR) are enriched in polar residues. Basic and acidic residues-rich tracts occupy residues 1887–1896 (VKPESRRESS), 1904–1942 (HAED…ESDK), 1960–1976 (MKDE…ESVK), 1994–2007 (SAKD…ELSR), 2041–2059 (SVKD…ESVA), 2078–2096 (SIKD…ESVA), 2115–2133 (SIKD…ESVA), 2152–2170 (SIKD…ESVA), 2189–2207 (SIKD…ESVA), 2226–2244 (SIKD…ESVA), 2263–2281 (SIKD…ESVA), 2300–2318 (SIKD…ESVA), 2337–2355 (SIKD…ESAA), 2374–2391 (SVKD…RESM), 2419–2435 (SVKD…RRES), 2466–2482 (SVKD…ESKT), 2560–2588 (IKYD…EDKS), and 2604–2627 (SDHE…DKSR). Repeat 20 spans residues 2355–2391 (AEKSPLPSKEASRPASVAESVKDEADKSKEESRRESM). 2 tandem repeats follow at residues 2703 to 2726 (LAQI…PSAP) and 2761 to 2787 (WVAE…ASTE). The segment covering 2764–2780 (ESKDDAAQLKSSVEDLR) has biased composition (basic and acidic residues). Ser-2800 bears the Phosphoserine; by GSK3-beta mark. 3 repeat units span residues 2820-2846 (LPLT…DFPQ), 2864-2892 (LSKV…AEER), and 2907-2933 (VEKS…GDIS). Residues 2845–2861 (PQTSTPTSSPTVASVQP) are compositionally biased toward low complexity. Composition is skewed to basic and acidic residues over residues 2889-2914 (AEER…KDAS) and 2942-2954 (GPKD…KESS). Polar residues predominate over residues 2955–2966 (RPPSVSASITGD). A run of 28 repeats spans residues 2956–2987 (PPSV…EHDK), 3006–3034 (GKSD…SRRE), 3049–3075 (SRPE…KDTS), 3089–3117 (EKSE…SQEA), 3131–3158 (DEKQ…SPMD), 3200–3224 (KSDI…SVVG), 3228–3256 (DEKA…APPS), 3265–3293 (VLGS…EKSL), 3302–3330 (PESE…ESVK), 3339–3367 (KEAS…ESLP), 3376–3404 (DEKS…EQFP), 3413–3441 (PASV…ASRP), 3450–3478 (DEAE…ASRP), 3487–3515 (DEAD…ASRP), 3524–3552 (DEAE…ASRP), 3561–3589 (DEAE…ASRP), 3598–3626 (DEAE…ASRP), 3635–3663 (DEAE…ASRP), 3672–3700 (DEAE…ASRP), 3709–3737 (DEAE…ASRP), 3746–3774 (DDAE…ASRP), 3783–3811 (DEAE…ASRP), 3820–3848 (DEAE…ASRP), 3867–3894 (RRES…SVKD), 3895–3921 (EAEK…EASR), 3931–3958 (DEAD…EASR), 3968–3995 (DETE…EASR), and 4005–4032 (DEAE…ESSR). Basic and acidic residues-rich tracts occupy residues 2980–2996 (SVKD…ESIA), 3017–3051 (SQKD…ESRP), 3061–3075 (VPRE…KDTS), 3087–3116 (EDEK…KSQE), 3156–3168 (PMDK…EPSR), 3175–3208 (SIKH…KGEK), and 3226–3248 (IKDE…ESSK). A phosphoserine mark is found at Ser-3067, Ser-3071, and Ser-3075. Basic and acidic residues predominate over residues 3300-3310 (SRPESEAESLK). Residues 3316–3327 (SQETSRPESVTE) show a composition bias toward polar residues. Basic and acidic residues-rich tracts occupy residues 3350–3363 (NAKD…EQRP), 3373–3399 (SIKD…RESV), 3419–3431 (SVKD…KEES), 3448–3465 (VKDE…ESVA), 3484–3502 (SVKD…ESGA), 3521–3539 (SIKD…ESVA), 3558–3576 (SVKD…DSVA), 3599–3613 (EAEK…ESVA), 3632–3650 (SIKD…ESVA), 3669–3687 (SVKD…DSVA), 3710–3724 (EAEK…ESVA), 3743–3761 (SVKD…ESVA), 3780–3798 (SVKD…ESVA), and 3817–3835 (SVKD…ESVA). The span at 3836 to 3850 (EKSSLASKKASRPAS) shows a compositional bias: low complexity. 8 stretches are compositionally biased toward basic and acidic residues: residues 3854–3872 (SVKD…ESVA), 3891–3909 (SVKD…ESVA), 3928–3946 (SVKD…ESGA), 3965–3983 (SVKD…ESVT), 4002–4020 (SVKD…ESVA), 4039–4066 (SIKD…ESIK), 4086–4095 (SVKDETEKPE), and 4115–4141 (AKDE…KEAS). Polar residues-rich tracts occupy residues 4142 to 4152 (RSLSVAETASS) and 4214 to 4223 (QPDTGHTAST). Composition is skewed to basic and acidic residues over residues 4362-4379 (IIPD…KSTA), 4386-4410 (DKST…KSSP), and 4419-4432 (IEEK…EKAQ). Low complexity predominate over residues 4443–4461 (PESVASQPESVPSPSQSAA). Residues 4462–4481 (SHEHKEVELSESHKAEKSSR) are compositionally biased toward basic and acidic residues. Positions 4498–4508 (RPASSTSQFST) are enriched in polar residues. Over residues 4517–4528 (ESLLHSLTTTET) the composition is skewed to low complexity. Positions 4529-4539 (VETKQMEEKSS) are enriched in basic and acidic residues. Residues 4540 to 4560 (FESVSTSVTKSTVLSSQSTVQ) show a composition bias toward low complexity. 2 stretches are compositionally biased toward basic and acidic residues: residues 4575 to 4584 (KVEDSSRRES) and 4639 to 4650 (SNKEIKDARETK). Low complexity-rich tracts occupy residues 4651-4662 (VTSQFTTTTSSA) and 4703-4714 (TTASAVSSTSAS). Acidic residues predominate over residues 4744–4754 (PEDEEPADDVD). Basic and acidic residues-rich tracts occupy residues 4755-4764 (ERSSVKESRS) and 4788-4798 (LVEEEHEHVEE). Residues 4804-4829 (TSTSKTTTLLQSSEQSSTTTSSTSKT) are compositionally biased toward low complexity. Polar residues predominate over residues 4835–4851 (ESITLTQMDQQTSQSQG). A compositionally biased stretch (low complexity) spans 4875-4905 (GSAGSVIGAGAGAVAAGGKCESSAASIVSSS). Over residues 4915–4930 (GKSSPGALTSESQSIP) the composition is skewed to polar residues. At Ser-4950 the chain carries Phosphoserine; by GSK3-beta. A compositionally biased stretch (basic and acidic residues) spans 4955–4970 (VSKDELKSLEMQHHSQ). Over residues 5101 to 5112 (SYELQHSSSGVS) the composition is skewed to polar residues. The span at 5185–5196 (SQSSESVESSSQ) shows a compositional bias: low complexity.

In terms of assembly, heterodimer of a heavy and a light chain. Interacts with Fmr1. Found in a complex with tubulin and Futsch. Several minor light chains can be created with markedly different pIs. In terms of processing, phosphorylated by SGG/GSK3. Phosphorylated by LRRK2 at the presynapse of neuromuscular junctions, which negatively regulates the activity controlling synaptic differentiation. Neuronal cells within the PNS and CNS.

The protein localises to the cytoplasm. The protein resides in the cytoskeleton. Its function is as follows. During embryogenesis, necessary for dendritic and axonal organization and growth at the neuromuscular junction through the regulation of the synaptic microtubule cytoskeleton. Microtubule hairpin loops are found within a small subset of synaptic boutons at the neuromuscular synapse, these loops are stabilized by futsch. Loop morphology and dynamics suggest that rearrangement of these microtubule-based loops is a critical component of the process of bouton division and for subsequent nerve-terminal growth and branching. Translation is repressed by Fmr1. Together with ringer, required for neuromuscular junction (NMJ) bouton growth by regulating synaptic microtubules. Function with ringer in maintaining microtubule stability and dynamics, is essential for promoting axon regeneration in response to peripheral (PNS) and central nervous system (CNS) injury. In response to axotomy, acts downstream of a stress response cascade involving Xbp1 splicing, to control axon regeneration. This chain is Microtubule-associated protein futsch (futsch), found in Drosophila melanogaster (Fruit fly).